The chain runs to 390 residues: Large ribosomal subunit protein mL44 (390 aa).

The N-terminal 59 residues, 1–59 (MGIVLKRAIAAGMKPFPNSTWHWSRTIRPFSQHLSSTCFLQQSSRFTSKRYLHLSTLTQ), are a transit peptide targeting the mitochondrion. Residues 139–205 (AFVNTVPTNK…LAHIAKYWGI (67 aa)) enclose the RNase III domain. One can recognise a DRBM domain in the interval 302–372 (QPTRELAMLC…ATDALMKWYC (71 aa)).

The protein belongs to the ribonuclease III family. Mitochondrion-specific ribosomal protein mL44 subfamily. In terms of assembly, component of the mitochondrial large ribosomal subunit (mt-LSU). Mature yeast 74S mitochondrial ribosomes consist of a small (37S) and a large (54S) subunit. The 37S small subunit contains a 15S ribosomal RNA (15S mt-rRNA) and 34 different proteins. The 54S large subunit contains a 21S rRNA (21S mt-rRNA) and 46 different proteins. mL44 forms a heterodimer with mL57 and stabilizes rRNA expansion segments 1/2 at a membrane-facing protuberance close to the point of attachment of the ribosome to the translocon in the membrane.

It is found in the mitochondrion. Functionally, component of the mitochondrial ribosome (mitoribosome), a dedicated translation machinery responsible for the synthesis of mitochondrial genome-encoded proteins, including at least some of the essential transmembrane subunits of the mitochondrial respiratory chain. The mitoribosomes are attached to the mitochondrial inner membrane and translation products are cotranslationally integrated into the membrane. This Saccharomyces cerevisiae (strain ATCC 204508 / S288c) (Baker's yeast) protein is Large ribosomal subunit protein mL44 (MRPL3).